The sequence spans 127 residues: MORF4 family-associated protein 1 (127 aa).

Residues Glu76–Cys97 form a disordered region. Residues Arg92 to Ser126 are a coiled coil.

It belongs to the MORF4 family-associated protein family. As to quaternary structure, found in a complex composed of MORF4L1, MRFAP1 and RB1. Interacts via its N-terminus with MORF4L1. Interacts with CSTB and MORF4L2.

It is found in the nucleus. Its subcellular location is the cytoplasm. The protein resides in the perinuclear region. The sequence is that of MORF4 family-associated protein 1 from Bos taurus (Bovine).